The sequence spans 225 residues: Thymidylate kinase (225 aa).

Residue 9–16 (GIEGCGKT) participates in ATP binding.

The protein belongs to the thymidylate kinase family.

The catalysed reaction is dTMP + ATP = dTDP + ADP. In terms of biological role, phosphorylation of dTMP to form dTDP in both de novo and salvage pathways of dTTP synthesis. This is Thymidylate kinase from Citrifermentans bemidjiense (strain ATCC BAA-1014 / DSM 16622 / JCM 12645 / Bem) (Geobacter bemidjiensis).